Here is a 192-residue protein sequence, read N- to C-terminus: Probable nicotinate-nucleotide adenylyltransferase (192 aa).

It belongs to the NadD family.

The enzyme catalyses nicotinate beta-D-ribonucleotide + ATP + H(+) = deamido-NAD(+) + diphosphate. It functions in the pathway cofactor biosynthesis; NAD(+) biosynthesis; deamido-NAD(+) from nicotinate D-ribonucleotide: step 1/1. Catalyzes the reversible adenylation of nicotinate mononucleotide (NaMN) to nicotinic acid adenine dinucleotide (NaAD). The sequence is that of Probable nicotinate-nucleotide adenylyltransferase from Cereibacter sphaeroides (strain ATCC 17029 / ATH 2.4.9) (Rhodobacter sphaeroides).